Consider the following 322-residue polypeptide: FAD-dependent monooxygenase subE (322 aa).

Residues Glu35, Gly49, Arg108, and Asp313 each coordinate FAD.

Belongs to the paxM FAD-dependent monooxygenase family. The cofactor is FAD.

Its pathway is secondary metabolite biosynthesis; terpenoid biosynthesis. Its function is as follows. FAD-dependent monooxygenase; part of the gene cluster that mediates the biosynthesis of the immunosuppressants subglutinols, meroterpenoids consisting of an alpha-pyrone (4-hydroxy-5,6-dimethyl-2-pyrone) moiety attached to a decalin core fused to a five-membered cyclic ether carrying a prenylside chain. The first step of the pathway is the synthesis of the alpha-pyrone moiety by the polyketide synthase subA via condensation of one acetyl-CoA starter unit with 3 malonyl-CoA units and 2 methylations. The alpha-pyrone is then combined with geranylgeranyl pyrophosphate (GGPP) formed by the GGPP synthase subD through the action of the prenyltransferase subC to yield a linear alpha-pyrone diterpenoid. Subsequent steps in the subglutinol biosynthetic pathway involve the decalin core formation, which is thought to be initiated by the epoxidation of the C10-C11 olefin by the FAD-dependent oxidoreductase subE. The following cyclization cascade would be catalyzed by the terpene cyclase subB. Lastly, the FAD-dependent dehydrogenase subF probably catalyzes the five-membered cyclic ether formation to complete the formation of subglutinol A. Subsequent redox reactions appear to give rise to subglutinol C and D, however, it remains unclear which enzymes are responsible for these transformations. SubD may have secondary function in the conversion of the identified subglutinols to subglutinol analog 45, which seems to be the major product of the cluster. The sequence is that of FAD-dependent monooxygenase subE from Metarhizium robertsii (strain ARSEF 23 / ATCC MYA-3075) (Metarhizium anisopliae (strain ARSEF 23)).